A 286-amino-acid chain; its full sequence is Putative thiosulfate sulfurtransferase (286 aa).

In terms of domain architecture, Rhodanese 1 spans aspartate 27–aspartate 134. Residues lysine 162 and lysine 166 each participate in a glycyl lysine isopeptide (Lys-Gly) (interchain with G-Cter in SAMP2) cross-link. Residues valine 164–glutamate 283 enclose the Rhodanese 2 domain. The active-site Cysteine persulfide intermediate is the cysteine 242. Arginine 247 lines the substrate pocket.

It carries out the reaction thiosulfate + hydrogen cyanide = thiocyanate + sulfite + 2 H(+). In terms of biological role, may be a sulfotransferase involved in the formation of thiosulfate. The protein is Putative thiosulfate sulfurtransferase (tssA) of Haloferax volcanii (strain ATCC 29605 / DSM 3757 / JCM 8879 / NBRC 14742 / NCIMB 2012 / VKM B-1768 / DS2) (Halobacterium volcanii).